Reading from the N-terminus, the 107-residue chain is Phosphoribosyl-ATP pyrophosphatase (107 aa).

Belongs to the PRA-PH family.

The protein resides in the cytoplasm. The catalysed reaction is 1-(5-phospho-beta-D-ribosyl)-ATP + H2O = 1-(5-phospho-beta-D-ribosyl)-5'-AMP + diphosphate + H(+). The protein operates within amino-acid biosynthesis; L-histidine biosynthesis; L-histidine from 5-phospho-alpha-D-ribose 1-diphosphate: step 2/9. The chain is Phosphoribosyl-ATP pyrophosphatase from Neisseria gonorrhoeae (strain ATCC 700825 / FA 1090).